A 214-amino-acid chain; its full sequence is 3-isopropylmalate dehydratase small subunit (214 aa).

Belongs to the LeuD family. LeuD type 1 subfamily. As to quaternary structure, heterodimer of LeuC and LeuD.

The enzyme catalyses (2R,3S)-3-isopropylmalate = (2S)-2-isopropylmalate. It functions in the pathway amino-acid biosynthesis; L-leucine biosynthesis; L-leucine from 3-methyl-2-oxobutanoate: step 2/4. Catalyzes the isomerization between 2-isopropylmalate and 3-isopropylmalate, via the formation of 2-isopropylmaleate. The polypeptide is 3-isopropylmalate dehydratase small subunit (Pseudomonas putida (strain W619)).